A 1131-amino-acid polypeptide reads, in one-letter code: ATP-dependent helicase FUN30 (1131 aa).

The interval 1 to 70 (MSGSHSNDED…HTSKPLPSGS (70 aa)) is disordered. The segment covering 16–36 (PETSSPTKVASSSPLKPTSPT) has biased composition (polar residues). Residues 76 to 111 (VNLAREFPDFSQTLVQAVFKSNSFNLQSARERLTRL) form a CUE-like region region. The disordered stretch occupies residues 114-141 (QRQNWTWNKNASPKKSETPPPVKKSLPL). Position 232 is a phosphoserine (serine 232). Disordered stretches follow at residues 242–273 (KYGRHANDNDEEEEESMMTDDDDASGDDYTES) and 327–350 (NDKDTEENASNKRKRRAAASANES). The segment covering 250–271 (NDEEEEESMMTDDDDASGDDYT) has biased composition (acidic residues). Residue serine 369 is modified to Phosphoserine. Positions 400–533 (DLMNLGEDDD…GDDDDDDDDE (134 aa)) are disordered. Over residues 405 to 416 (GEDDDDDNDDGN) the composition is skewed to acidic residues. A compositionally biased stretch (low complexity) spans 417-432 (NDNNNSNNNNTAGADA). A compositionally biased stretch (basic and acidic residues) spans 433–442 (TSKEKEDTKA). Serine 451 is modified (phosphoserine). Over residues 480–533 (EDEDDDVDLEAIDDELPQSEHEDDDYEEEDEDYNDEEEDVEYDDGDDDDDDDDE) the composition is skewed to acidic residues. One can recognise a Helicase ATP-binding domain in the interval 584–752 (NLLYQNKMSC…MSLLEFIMPN (169 aa)). 597–604 (DDMGLGKT) contributes to the ATP binding site. The short motif at 703–706 (DEGH) is the DEGH box element. Positions 953–1108 (ALKKLLKTII…EDKKSQDVLE (156 aa)) constitute a Helicase C-terminal domain.

This sequence belongs to the SNF2/RAD54 helicase family. As to quaternary structure, homodimer.

The protein resides in the nucleus. Its subcellular location is the chromosome. The enzyme catalyses ATP + H2O = ADP + phosphate + H(+). Functionally, DNA helicase that possesses intrinsic ATP-dependent nucleosome-remodeling activity and is both required for DNA repair and heterochromatin organization. Promotes DNA end resection of double-strand breaks (DSBs) following DNA damage: probably acts by weakening histone DNA interactions in nucleosomes flanking DSBs, facilitating single-stranded DNA (ssDNA) production by the EXO1 and SGS1 machinery. Promotes gene silencing at heterochromatin by regulating the chromatin structure within or around silent loci. Also required for heterochromatin organization at centromeres. This is ATP-dependent helicase FUN30 (FUN30) from Saccharomyces cerevisiae (strain ATCC 204508 / S288c) (Baker's yeast).